The following is a 342-amino-acid chain: Dihydroorotase (342 aa).

Zn(2+)-binding residues include His13 and His15. Substrate-binding positions include 15–17 (HLR) and Asn41. Zn(2+) contacts are provided by Lys98, His135, and His173. The residue at position 98 (Lys98) is an N6-carboxylysine. Residue His135 participates in substrate binding. Leu218 contributes to the substrate binding site. Asp246 contacts Zn(2+). Asp246 is an active-site residue. Substrate-binding residues include His250 and Ala262.

It belongs to the metallo-dependent hydrolases superfamily. DHOase family. Class II DHOase subfamily. As to quaternary structure, homodimer. It depends on Zn(2+) as a cofactor.

It catalyses the reaction (S)-dihydroorotate + H2O = N-carbamoyl-L-aspartate + H(+). It participates in pyrimidine metabolism; UMP biosynthesis via de novo pathway; (S)-dihydroorotate from bicarbonate: step 3/3. Catalyzes the reversible cyclization of carbamoyl aspartate to dihydroorotate. This is Dihydroorotase from Aliivibrio fischeri (strain ATCC 700601 / ES114) (Vibrio fischeri).